A 243-amino-acid chain; its full sequence is Lectin-4 (243 aa).

The residue at position 1 (Gln-1) is a Pyrrolidone carboxylic acid. A glycan (N-linked (GlcNAc...) asparagine; in alpha chain) is linked at Asn-5. A glycan (N-linked (GlcNAc...) asparagine) is linked at Asn-18. Positions 129 and 131 each coordinate Mn(2+). The Ca(2+) site is built by Asp-131, Trp-133, Asn-135, and Asp-140. Mn(2+) contacts are provided by Asp-140 and His-145.

This sequence belongs to the leguminous lectin family. Homodimer of Alpha and Beta forms. N-glycosylation of Asn-5 converts form Beta to form Alpha.

Functionally, lectin which has a strong affinity for both the Lewis b and y human blood-group determinants. The sequence is that of Lectin-4 from Griffonia simplicifolia (Bandeiraea simplicifolia).